The chain runs to 134 residues: 16 kDa beta-galactoside-binding lectin (134 aa).

Residue Met1 is modified to N-acetylmethionine. Residues Gly4–Ser134 enclose the Galectin domain. Trp69–Lys75 provides a ligand contact to a beta-D-galactoside.

In terms of assembly, homodimer. Mainly in the liver (adult), mainly in the muscle (embryo).

Functionally, this protein binds beta-galactoside. Its physiological function is not yet known. It may be involved in the regulation of differentiation. In Gallus gallus (Chicken), this protein is 16 kDa beta-galactoside-binding lectin.